The primary structure comprises 395 residues: Cyclin-A2 (395 aa).

The disordered stretch occupies residues 1–93; it reads MLAEQENQEN…EEAADAPGLR (93 aa). The span at 27-60 shows a compositional bias: low complexity; the sequence is ALGLLRGGPARPGPAAQAARNGEGRGAAAGQQQQ.

The protein belongs to the cyclin family. Cyclin AB subfamily. Interacts with the CDK1 and CDK2 protein kinases to form serine/threonine kinase holoenzyme complexes.

The protein resides in the nucleus. It is found in the cytoplasm. Functionally, cyclin which controls both the G1/S and the G2/M transition phases of the cell cycle. Functions through the formation of specific serine/threonine kinase holoenzyme complexes with the cyclin-dependent protein kinases CDK1 and CDK2. The cyclin subunit confers the substrate specificity of these complexes and differentially interacts with and activates CDK1 and CDK2 throughout the cell cycle. In Gallus gallus (Chicken), this protein is Cyclin-A2.